The sequence spans 382 residues: Mating-type protein a-1 (382 aa).

Residues 116 to 184 (IPRPPNAYIL…RLLLENPDYR (69 aa)) constitute a DNA-binding region (HMG box).

In terms of assembly, binds in vitro to DNA containing a specific core sequence 5'-CTTTG-3'.

The protein localises to the nucleus. Functionally, mating type proteins are sequence specific DNA-binding proteins that act as master switches in yeast differentiation by controlling gene expression in a cell type-specific fashion. Transcriptional activator that induces the transcription of a-specific genes like mating factor mfa-1. Required for mating as an a-cell, blocking of heterokaryon formation (vegetative incompatibility) and for perithecium induction. The protein is Mating-type protein a-1 (mta-1) of Neurospora crassa.